Consider the following 560-residue polypeptide: Eukaryotic translation initiation factor 3 subunit D-1 (560 aa).

Residues 98–166 are disordered; it reads VQKPPHQRGR…RGPPPKMRES (69 aa). The segment covering 100-121 has biased composition (basic residues); it reads KPPHQRGRFRNMRNSRSGRGRN. Thr128 is modified (phosphothreonine). Basic residues predominate over residues 147-156; sequence GRGMGKKFGH. The RNA gate stretch occupies residues 291-305; it reads EFDLLTVNESSVEPP.

The protein belongs to the eIF-3 subunit D family. As to quaternary structure, component of the eukaryotic translation initiation factor 3 (eIF-3) complex. The eIF-3 complex interacts with pix.

It is found in the cytoplasm. MRNA cap-binding component of the eukaryotic translation initiation factor 3 (eIF-3) complex, which is involved in protein synthesis of a specialized repertoire of mRNAs and, together with other initiation factors, stimulates binding of mRNA and methionyl-tRNAi to the 40S ribosome. The eIF-3 complex specifically targets and initiates translation of a subset of mRNAs involved in cell proliferation. In the eIF-3 complex, eif3d specifically recognizes and binds the 7-methylguanosine cap of a subset of mRNAs. The protein is Eukaryotic translation initiation factor 3 subunit D-1 of Drosophila sechellia (Fruit fly).